The chain runs to 196 residues: MTLQCTKSAGHWRMVVWDEEGFQGRRHEFTAECPSVLELGFETVRSLKVLSGAWVGFEHAGFQGQQYVLERGDYPGWDAWGGNTAYPAERLTSFRPVACANHRDSRLTIFEQENFLGRKGELNDDYPSLQAMGWDGTEVGSFHVQSGAWVCSQFPGYRGFQYILESDHHSGDYKHFREWGSHAHTFQVQSVRRIQQ.

Thr2 carries the N-acetylthreonine modification. The N-terminal arm stretch occupies residues 2-11 (TLQCTKSAGH). Beta/gamma crystallin 'Greek key' domains follow at residues 12–51 (WRMV…KVLS) and 52–98 (GAWV…RPVA). The connecting peptide stretch occupies residues 99–104 (CANHRD). Beta/gamma crystallin 'Greek key' domains follow at residues 105 to 146 (SRLT…HVQS) and 147 to 195 (GAWV…RRIQ).

This sequence belongs to the beta/gamma-crystallin family. Homo/heterodimer, or complexes of higher-order. The structure of beta-crystallin oligomers seems to be stabilized through interactions between the N-terminal arms.

Crystallins are the dominant structural components of the vertebrate eye lens. This chain is Beta-crystallin A4 (Cryba4), found in Mus musculus (Mouse).